The primary structure comprises 377 residues: 2-aminoethylphosphonate--pyruvate transaminase (377 aa).

The residue at position 194 (Lys-194) is an N6-(pyridoxal phosphate)lysine.

It belongs to the class-V pyridoxal-phosphate-dependent aminotransferase family. PhnW subfamily. Homodimer. Requires pyridoxal 5'-phosphate as cofactor.

The catalysed reaction is (2-aminoethyl)phosphonate + pyruvate = phosphonoacetaldehyde + L-alanine. In terms of biological role, involved in phosphonate degradation. The polypeptide is 2-aminoethylphosphonate--pyruvate transaminase (Cupriavidus taiwanensis (strain DSM 17343 / BCRC 17206 / CCUG 44338 / CIP 107171 / LMG 19424 / R1) (Ralstonia taiwanensis (strain LMG 19424))).